We begin with the raw amino-acid sequence, 879 residues long: Alanine--tRNA ligase (879 aa).

Residues His-567, His-571, Cys-669, and His-673 each coordinate Zn(2+).

It belongs to the class-II aminoacyl-tRNA synthetase family. The cofactor is Zn(2+).

It is found in the cytoplasm. It carries out the reaction tRNA(Ala) + L-alanine + ATP = L-alanyl-tRNA(Ala) + AMP + diphosphate. Functionally, catalyzes the attachment of alanine to tRNA(Ala) in a two-step reaction: alanine is first activated by ATP to form Ala-AMP and then transferred to the acceptor end of tRNA(Ala). Also edits incorrectly charged Ser-tRNA(Ala) and Gly-tRNA(Ala) via its editing domain. The protein is Alanine--tRNA ligase of Levilactobacillus brevis (strain ATCC 367 / BCRC 12310 / CIP 105137 / JCM 1170 / LMG 11437 / NCIMB 947 / NCTC 947) (Lactobacillus brevis).